The sequence spans 1047 residues: Atrial natriuretic peptide receptor 2 (1047 aa).

The first 22 residues, 1–22, serve as a signal peptide directing secretion; sequence MALPSLLLLVAALAGGVRPPGA. Over 23–458 the chain is Extracellular; the sequence is RNLTLAVVLP…DKTPLSTLAI (436 aa). Asparagine 24 and asparagine 35 each carry an N-linked (GlcNAc...) asparagine glycan. Residues cysteine 75 and cysteine 101 are joined by a disulfide bond. N-linked (GlcNAc...) asparagine glycans are attached at residues asparagine 161, asparagine 195, asparagine 244, asparagine 277, and asparagine 349. The chain crosses the membrane as a helical span at residues 459–478; that stretch reads VALGTGITFIMFGVSSFLIF. Residues 479 to 1047 lie on the Cytoplasmic side of the membrane; sequence RKLMLEKELA…GERKGPPGLL (569 aa). Serine 513 carries the post-translational modification Phosphoserine. In terms of domain architecture, Protein kinase spans 513 to 786; the sequence is SRLTLSLRGS…PDFGQIKGFI (274 aa). Threonine 516 is subject to Phosphothreonine. Phosphoserine is present on residues serine 518, serine 522, serine 523, and serine 526. Threonine 529 is modified (phosphothreonine). In terms of domain architecture, Guanylate cyclase spans 861 to 991; that stretch reads TIYFSDIVGF…DTVNTASRME (131 aa).

It belongs to the adenylyl cyclase class-4/guanylyl cyclase family. Phosphorylated. Phosphorylation of the protein kinase-like domain is required for full activation by CNP. Post-translationally, glycosylated.

Its subcellular location is the cell membrane. It catalyses the reaction GTP = 3',5'-cyclic GMP + diphosphate. Its function is as follows. Receptor for the C-type natriuretic peptide NPPC/CNP hormone. Has guanylate cyclase activity upon binding of its ligand. May play a role in the regulation of skeletal growth. In Homo sapiens (Human), this protein is Atrial natriuretic peptide receptor 2 (NPR2).